Here is a 340-residue protein sequence, read N- to C-terminus: Phenylalanine--tRNA ligase alpha subunit (340 aa).

Glutamate 251 is a binding site for Mg(2+).

The protein belongs to the class-II aminoacyl-tRNA synthetase family. Phe-tRNA synthetase alpha subunit type 1 subfamily. Tetramer of two alpha and two beta subunits. Mg(2+) is required as a cofactor.

It is found in the cytoplasm. The catalysed reaction is tRNA(Phe) + L-phenylalanine + ATP = L-phenylalanyl-tRNA(Phe) + AMP + diphosphate + H(+). The sequence is that of Phenylalanine--tRNA ligase alpha subunit from Porphyromonas gingivalis (strain ATCC 33277 / DSM 20709 / CIP 103683 / JCM 12257 / NCTC 11834 / 2561).